The primary structure comprises 550 residues: CTP synthase (550 aa).

Positions 1–277 are amidoligase domain; sequence MNGSADAGPR…GRAVERALGL (277 aa). A CTP-binding site is contributed by Ser23. Ser23 is a binding site for UTP. ATP is bound at residue 24 to 29; the sequence is SLGKGI. An L-glutamine-binding site is contributed by Tyr64. An ATP-binding site is contributed by Asp81. Mg(2+) contacts are provided by Asp81 and Glu151. Residues 158–160, 198–203, and Lys234 each bind CTP; these read DIE and KTKPTQ. UTP contacts are provided by residues 198–203 and Lys234; that span reads KTKPTQ. The Glutamine amidotransferase type-1 domain occupies 302–549; it reads KIAIAGKYVK…VEAALAYQER (248 aa). Gly364 serves as a coordination point for L-glutamine. Cys391 serves as the catalytic Nucleophile; for glutamine hydrolysis. Residues 392–395, Glu415, and Arg472 contribute to the L-glutamine site; that span reads LGLQ. Catalysis depends on residues His522 and Glu524.

The protein belongs to the CTP synthase family. Homotetramer.

The catalysed reaction is UTP + L-glutamine + ATP + H2O = CTP + L-glutamate + ADP + phosphate + 2 H(+). The enzyme catalyses L-glutamine + H2O = L-glutamate + NH4(+). It carries out the reaction UTP + NH4(+) + ATP = CTP + ADP + phosphate + 2 H(+). It participates in pyrimidine metabolism; CTP biosynthesis via de novo pathway; CTP from UDP: step 2/2. Its activity is regulated as follows. Allosterically activated by GTP, when glutamine is the substrate; GTP has no effect on the reaction when ammonia is the substrate. The allosteric effector GTP functions by stabilizing the protein conformation that binds the tetrahedral intermediate(s) formed during glutamine hydrolysis. Inhibited by the product CTP, via allosteric rather than competitive inhibition. Catalyzes the ATP-dependent amination of UTP to CTP with either L-glutamine or ammonia as the source of nitrogen. Regulates intracellular CTP levels through interactions with the four ribonucleotide triphosphates. This is CTP synthase from Thermus thermophilus (strain ATCC BAA-163 / DSM 7039 / HB27).